The following is a 450-amino-acid chain: tRNA-2-methylthio-N(6)-dimethylallyladenosine synthase (450 aa).

One can recognise an MTTase N-terminal domain in the interval 3–119 (RRYYITTFGC…LGELLEQVWN (117 aa)). Residues Cys-12, Cys-48, Cys-82, Cys-154, Cys-158, and Cys-161 each coordinate [4Fe-4S] cluster. In terms of domain architecture, Radical SAM core spans 140 to 377 (RDSTVTAWVN…NHLVAKIAGD (238 aa)). Residues 380 to 444 (QRYLGREEVV…AFSLSGVPLA (65 aa)) form the TRAM domain.

Belongs to the methylthiotransferase family. MiaB subfamily. As to quaternary structure, monomer. It depends on [4Fe-4S] cluster as a cofactor.

It localises to the cytoplasm. It carries out the reaction N(6)-dimethylallyladenosine(37) in tRNA + (sulfur carrier)-SH + AH2 + 2 S-adenosyl-L-methionine = 2-methylsulfanyl-N(6)-dimethylallyladenosine(37) in tRNA + (sulfur carrier)-H + 5'-deoxyadenosine + L-methionine + A + S-adenosyl-L-homocysteine + 2 H(+). Functionally, catalyzes the methylthiolation of N6-(dimethylallyl)adenosine (i(6)A), leading to the formation of 2-methylthio-N6-(dimethylallyl)adenosine (ms(2)i(6)A) at position 37 in tRNAs that read codons beginning with uridine. This chain is tRNA-2-methylthio-N(6)-dimethylallyladenosine synthase, found in Thermosynechococcus vestitus (strain NIES-2133 / IAM M-273 / BP-1).